The chain runs to 350 residues: Guanine nucleotide-binding protein G(t) subunit alpha-1 (350 aa).

Residues 1–21 (MGAGASAEEKHSRELEKKLKE) form a disordered region. The N-myristoyl glycine moiety is linked to residue Gly-2. A compositionally biased stretch (basic and acidic residues) spans 7–21 (AEEKHSRELEKKLKE). A G-alpha domain is found at 28-350 (RTVKLLLLGA…KENLKDCGLF (323 aa)). The tract at residues 31–44 (KLLLLGAGESGKST) is G1 motif. 36 to 43 (GAGESGKS) contributes to the GTP binding site. Position 43 (Ser-43) interacts with Mg(2+). Tyr-142 is subject to Phosphotyrosine; by SRC. GTP-binding positions include Asp-146, 171 to 177 (LRSRVKT), Gly-199, 265 to 268 (NKKD), and Ala-322. A G2 motif region spans residues 169–177 (DVLRSRVKT). Position 174 is an ADP-ribosylarginine; by cholera toxin (Arg-174). Thr-177 provides a ligand contact to Mg(2+). The tract at residues 192–201 (FRMFDVGGQR) is G3 motif. Residues 261–268 (VLFLNKKD) are G4 motif. The G5 motif stretch occupies residues 320–325 (TCATDT). Residues 340-350 (IKENLKDCGLF) are interaction with RHO. The residue at position 347 (Cys-347) is an ADP-ribosylcysteine; by pertussis toxin.

The protein belongs to the G-alpha family. G(i/o/t/z) subfamily. As to quaternary structure, heterotrimeric G proteins are composed of 3 subunits alpha, beta and gamma. The alpha chain contains the guanine nucleotide binding site. Interacts with RHO. Interacts with RGS9 and PDE6G. Interacts (when myristoylated) with UNC119; interaction is required for localization in sensory neurons. In terms of tissue distribution, rod photoreceptor cells. Predominantly expressed in the retina followed by the ciliary body, iris and retinal pigment epithelium.

The protein resides in the cell projection. Its subcellular location is the cilium. It is found in the photoreceptor outer segment. It localises to the membrane. The protein localises to the photoreceptor inner segment. In terms of biological role, functions as a signal transducer for the rod photoreceptor RHO. Required for normal RHO-mediated light perception by the retina. Guanine nucleotide-binding proteins (G proteins) function as transducers downstream of G protein-coupled receptors (GPCRs), such as the photoreceptor RHO. The alpha chain contains the guanine nucleotide binding site and alternates between an active, GTP-bound state and an inactive, GDP-bound state. Activated RHO promotes GDP release and GTP binding. Signaling is mediated via downstream effector proteins, such as cGMP-phosphodiesterase. The polypeptide is Guanine nucleotide-binding protein G(t) subunit alpha-1 (GNAT1) (Homo sapiens (Human)).